Reading from the N-terminus, the 432-residue chain is 7-dehydrocholesterol reductase (432 aa).

Transmembrane regions (helical) follow at residues 12 to 34 (YASM…YTMV), 64 to 86 (LIAW…LLPG), 107 to 126 (LAAY…FGIF), 136 to 155 (GEIF…LLYI), 195 to 212 (FTNC…AVTY), 227 to 249 (MLVN…AGYW), 261 to 283 (FYIC…MYLV), 287 to 309 (VELG…YINY), and 371 to 393 (SAFF…VIFL).

It belongs to the ERG4/ERG24 family.

Its subcellular location is the endoplasmic reticulum membrane. It catalyses the reaction cholesterol + NADP(+) = 7-dehydrocholesterol + NADPH + H(+). The protein operates within lipid metabolism; steroid biosynthesis. Production of cholesterol by reduction of C7-C8 double bond of 7-dehydrocholesterol (7-DHC). Lesions in the gene coding for the enzyme cause dwarfism. The sequence is that of 7-dehydrocholesterol reductase (DWF5) from Arabidopsis thaliana (Mouse-ear cress).